Reading from the N-terminus, the 661-residue chain is Immunoglobulin-like domain-containing receptor 2 (661 aa).

The N-terminal stretch at 1–35 is a signal peptide; sequence MPAFPTLDLDGKLGKMDRVVLGWTAVFWLTAMVEG. An Ig-like V-type domain is found at 36–177; that stretch reads LQVTVPDKKK…LEGKNEDSVE (142 aa). Topologically, residues 36–201 are lumenal; that stretch reads LQVTVPDKKK…PSFAVEIMPE (166 aa). Cys-57 and Cys-160 form a disulfide bridge. A helical transmembrane segment spans residues 202–222; sequence WVFVGLVILGIFLFFVLVGIC. Over 223–661 the chain is Cytoplasmic; the sequence is WCQCCPHSCC…DFPTRMSLVV (439 aa). Disordered stretches follow at residues 288–310, 410–429, and 453–661; these read LMDKPHPPPLAPSDSTGGSHSVR, EDRESFRHSQQRSKSEMLSR, and QRSR…SLVV. Basic and acidic residues-rich tracts occupy residues 410-428 and 463-478; these read EDRESFRHSQQRSKSEMLS and HEARAGSRFERSESRA. Position 487 is a phosphoserine (Ser-487). Basic and acidic residues predominate over residues 491-506; that stretch reads YYGRGRSREPPGDGER. Arg-559 carries the omega-N-methylarginine modification. At Ser-594 the chain carries Phosphoserine. Positions 595 to 607 are enriched in acidic residues; sequence EGEDEDDAADEDA. Residues 628-639 show a composition bias toward basic and acidic residues; sequence RGRDLSFHSNSE.

The protein belongs to the immunoglobulin superfamily. LISCH7 family. As to quaternary structure, interacts with MARVELD2 and OCLN. Interacts with P4HB and HSPA5; the interaction with HSPA5 stabilizes ILDR2 expression. Interacts (via C-terminus) with TRA2A, TRA2B and SRSF1. As to expression, expressed in epithelial tissues, mainly in liver, kidney and colon.

The protein localises to the endoplasmic reticulum membrane. Its subcellular location is the cell junction. It is found in the tight junction. It localises to the nucleus. Functionally, may be involved in ER stress pathways with effects on lipid homeostasis and insulin secretion. With ILDR1 and LSR, involved in the maintain of the epithelial barrier function through the recruitment of MARVELD2/tricellulin to tricellular tight junctions. Also functions as a B7-like protein family member expressed on immune cells and inflamed tissue and with T-cell inhibitory activity. In the inner ear, may regulate alternative pre-mRNA splicing via binding to TRA2A, TRA2B and SRSF1. This is Immunoglobulin-like domain-containing receptor 2 from Mus musculus (Mouse).